Consider the following 280-residue polypeptide: Chaperone protein DnaJ 2 (280 aa).

Positions 6–70 constitute a J domain; that stretch reads DYYAILGVPR…EKRRIYDTYG (65 aa).

It belongs to the DnaJ family. As to quaternary structure, forms a heterononamer with DnaJ and DafA in the resting state. Three copies of each protein are present in the complex.

The protein resides in the cytoplasm. Functionally, does not influence ATP binding or hydrolysis nor ADP release. Exerts influence on the interaction of DnaK with substrates; in the presence of DafA, DnaJ inhibits substrate binding, and substrate already bound to DnaK is displaced by DnaJ and DafA. This chain is Chaperone protein DnaJ 2 (dnaJ2), found in Thermus thermophilus (strain ATCC 27634 / DSM 579 / HB8).